A 981-amino-acid polypeptide reads, in one-letter code: GPI ethanolamine phosphate transferase 1 (981 aa).

The Cytoplasmic segment spans residues 1–6 (MAGSSR). The chain crosses the membrane as a helical span at residues 7 to 27 (IGFMAIAVAFHLVYILSIFDI). Residues 28 to 464 (YFVSPIVTGM…LQTYDWLFLR (437 aa)) are Lumenal-facing. 3 N-linked (GlcNAc...) asparagine glycosylation sites follow: Asn-148, Asn-211, and Asn-295. A helical membrane pass occupies residues 465–485 (ALITIGYLGWMAYATTTVLSL). Over 486 to 496 (YVVKESMSPQR) the chain is Cytoplasmic. Residues 497–517 (TLLGSAFFLSLLVALYSSFII) form a helical membrane-spanning segment. At 518 to 519 (SK) the chain is on the lumenal side. A helical membrane pass occupies residues 520–540 (SPPAYYLYAFFPVLFWEEVYA). Residues 541–560 (RRANVAKGFQALFGHVKSGG) are Cytoplasmic-facing. The helical transmembrane segment at 561-581 (AVVALVFNVVLYLGVIQSLAL) threads the bilayer. Residues 582–587 (AYIHRE) lie on the Lumenal side of the membrane. The helical transmembrane segment at 588-608 (ILTGLFVLGAFWPMTQGISFL) threads the bilayer. The Cytoplasmic segment spans residues 609-611 (RSH). A helical membrane pass occupies residues 612–632 (LFLSMLWFFSCLAMSTFTLLP). Over 633 to 638 (AMKVED) the chain is Lumenal. The chain crosses the membrane as a helical span at residues 639-659 (IPLIMAGGGLMTFVGLAYLVL). The Cytoplasmic segment spans residues 660–681 (EDFILSDVSSSKTKLKRLHTSR). The helical transmembrane segment at 682 to 702 (TLLGIQVGLIILAMLVTHSSA) threads the bilayer. Residues 703 to 708 (TSLQAK) lie on the Lumenal side of the membrane. The chain crosses the membrane as a helical span at residues 709–729 (LGLPKGNQIVGWFVLVTSLLM). At 730–744 (PLAYRLQPNSHYMHR) the chain is on the cytoplasmic side. A helical transmembrane segment spans residues 745–767 (LAIIFLTCAPTFVILTISYEGLF). Residues 768–819 (YVAFSITLLSWVRLEYAVDAFTQEKAKKQATVAGSQQHTPSTFRPLSLSDAR) are Lumenal-facing. The chain crosses the membrane as a helical span at residues 820–840 (IALFFMVLLQSAFFSTGNIAS). Residues 841–862 (ISSFSLESVSRLIPVFDPFSQG) lie on the Cytoplasmic side of the membrane. The chain crosses the membrane as a helical span at residues 863–883 (ALLILKIIIPFFLISANLGVL). Residues 884–892 (NKRLGVAPS) are Lumenal-facing. Residues 893–913 (AIFMVVLTASDVLTLYFFWVV) form a helical membrane-spanning segment. Over 914–929 (KDEGSWLEIGSTITHF) the chain is Cytoplasmic. Residues 930–950 (AIASFLCVFVAALEFVSAAFI) traverse the membrane as a helical segment. Residues 951 to 981 (AGIEVEDTKSAALTSASTKADEKVPPVAGAE) lie on the Lumenal side of the membrane.

This sequence belongs to the PIGG/PIGN/PIGO family. PIGN subfamily.

It is found in the endoplasmic reticulum membrane. The protein operates within glycolipid biosynthesis; glycosylphosphatidylinositol-anchor biosynthesis. Functionally, ethanolamine phosphate transferase involved in glycosylphosphatidylinositol-anchor biosynthesis. Transfers ethanolamine phosphate to the first alpha-1,4-linked mannose of the glycosylphosphatidylinositol precursor of GPI-anchor. The polypeptide is GPI ethanolamine phosphate transferase 1 (MCD4) (Gibberella zeae (strain ATCC MYA-4620 / CBS 123657 / FGSC 9075 / NRRL 31084 / PH-1) (Wheat head blight fungus)).